Reading from the N-terminus, the 248-residue chain is tRNA (guanine-N(1)-)-methyltransferase (248 aa).

Residues Gly114 and 134–139 (IGDYVL) contribute to the S-adenosyl-L-methionine site.

The protein belongs to the RNA methyltransferase TrmD family. As to quaternary structure, homodimer.

The protein localises to the cytoplasm. It catalyses the reaction guanosine(37) in tRNA + S-adenosyl-L-methionine = N(1)-methylguanosine(37) in tRNA + S-adenosyl-L-homocysteine + H(+). In terms of biological role, specifically methylates guanosine-37 in various tRNAs. This Blochmanniella floridana protein is tRNA (guanine-N(1)-)-methyltransferase.